Reading from the N-terminus, the 481-residue chain is Argininosuccinate lyase (481 aa).

Belongs to the lyase 1 family. Argininosuccinate lyase subfamily.

The protein localises to the cytoplasm. It carries out the reaction 2-(N(omega)-L-arginino)succinate = fumarate + L-arginine. It functions in the pathway amino-acid biosynthesis; L-arginine biosynthesis; L-arginine from L-ornithine and carbamoyl phosphate: step 3/3. This is Argininosuccinate lyase from Methanococcus maripaludis (strain DSM 14266 / JCM 13030 / NBRC 101832 / S2 / LL).